We begin with the raw amino-acid sequence, 1388 residues long: CRISPR-associated endonuclease Cas9 2 (1388 aa).

The active-site For RuvC-like nuclease domain is the Asp-10. Mg(2+)-binding residues include Asp-10, Glu-763, and Glu-767. Positions 771–928 constitute an HNH Cas9-type domain; the sequence is TNQGKSNSQQ…DKAGFIQRQL (158 aa). Residue His-847 is the Proton acceptor for HNH nuclease domain of the active site. Mg(2+) is bound at residue His-990. The segment covering 1100-1109 has biased composition (basic and acidic residues); the sequence is EQNHGLDRGK. The disordered stretch occupies residues 1100–1130; the sequence is EQNHGLDRGKPKGLFNANLSSKPKPNSNENL. Residues 1102-1388 form a PAM-interacting domain (PI) region; that stretch reads NHGLDRGKPK…RIDLAKLGEG (287 aa). The segment covering 1116–1129 has biased composition (polar residues); sequence ANLSSKPKPNSNEN.

It belongs to the CRISPR-associated protein Cas9 family. Subtype II-A subfamily. As to quaternary structure, monomer. Binds crRNA and tracrRNA. The cofactor is Mg(2+).

Functionally, CRISPR (clustered regularly interspaced short palindromic repeat) is an adaptive immune system that provides protection against mobile genetic elements (viruses, transposable elements and conjugative plasmids). CRISPR clusters contain spacers, sequences complementary to antecedent mobile elements, and target invading nucleic acids. CRISPR clusters are transcribed and processed into CRISPR RNA (crRNA). In type II CRISPR systems correct processing of pre-crRNA requires a trans-encoded small RNA (tracrRNA), endogenous ribonuclease 3 (rnc) and this protein. The tracrRNA serves as a guide for ribonuclease 3-aided processing of pre-crRNA. Subsequently Cas9/crRNA/tracrRNA endonucleolytically cleaves linear or circular dsDNA target complementary to the spacer yielding blunt ends; Cas9 is inactive in the absence of the 2 guide RNAs (gRNA). Cas9 recognizes a 3'-G-rich protospacer adjacent motif (PAM, GGG in this organism) in the CRISPR repeat sequences to help distinguish self versus nonself, as targets within the bacterial CRISPR locus do not have PAMs. PAM recognition is also required for catalytic activity. Complements the gRNA coprocessing defect in a cas9 deletion in S.pyogenes strain 370, and cuts target DNA in Cas9:gRNAs mixing experiments with S.mutans strain UA159. This is CRISPR-associated endonuclease Cas9 2 from Streptococcus thermophilus (strain ATCC BAA-491 / LMD-9).